The following is a 116-amino-acid chain: Protein aq_1857 (116 aa).

Belongs to the HesB/IscA family.

The chain is Protein aq_1857 from Aquifex aeolicus (strain VF5).